Consider the following 152-residue polypeptide: Nucleoside diphosphate kinase A (152 aa).

ATP is bound by residues Lys12, Phe60, Arg88, and Thr94. Lys100 participates in a covalent cross-link: Glycyl lysine isopeptide (Lys-Gly) (interchain with G-Cter in ubiquitin). Positions 105 and 115 each coordinate ATP. The active-site Pros-phosphohistidine intermediate is the His118. Residues Ser120, Ser122, and Ser125 each carry the phosphoserine modification.

This sequence belongs to the NDK family. In terms of assembly, hexamer of two different chains: An and B (A6, A5B, A4B2, A3B3, A2B4, AB5, B6). Interacts with PRUNE1. Component of the SET complex, composed of at least ANP32A, APEX1, HMGB2, NME1, SET and TREX1. Within this complex, interacts directly with SET. Also interacts with TREX1, but only following translocation to the nucleus. Mg(2+) serves as cofactor.

The protein resides in the cytoplasm. Its subcellular location is the nucleus. The catalysed reaction is a 2'-deoxyribonucleoside 5'-diphosphate + ATP = a 2'-deoxyribonucleoside 5'-triphosphate + ADP. It catalyses the reaction a ribonucleoside 5'-diphosphate + ATP = a ribonucleoside 5'-triphosphate + ADP. With respect to regulation, autophosphorylation at His-118 increases serine/threonine protein kinase activity of the enzyme. Interaction with the SET complex inhibits exonuclease activity. In terms of biological role, major role in the synthesis of nucleoside triphosphates other than ATP. The ATP gamma phosphate is transferred to the NDP beta phosphate via a ping-pong mechanism, using a phosphorylated active-site intermediate. Possesses nucleoside-diphosphate kinase, serine/threonine-specific protein kinase, geranyl and farnesyl pyrophosphate kinase, histidine protein kinase and 3'-5' exonuclease activities. Involved in cell proliferation, differentiation and development, signal transduction, G protein-coupled receptor endocytosis, and gene expression. Required for neural development including neural patterning and cell fate determination. During GZMA-mediated cell death, works in concert with TREX1. NME1 nicks one strand of DNA and TREX1 removes bases from the free 3' end to enhance DNA damage and prevent DNA end reannealing and rapid repair. This chain is Nucleoside diphosphate kinase A (NME1), found in Canis lupus familiaris (Dog).